The chain runs to 172 residues: Small ribosomal subunit protein uS5 (172 aa).

The S5 DRBM domain maps to 17–80 (LKEKMIAINR…EEARRNMTKV (64 aa)).

Belongs to the universal ribosomal protein uS5 family. Part of the 30S ribosomal subunit. Contacts proteins S4 and S8.

Functionally, with S4 and S12 plays an important role in translational accuracy. Its function is as follows. Located at the back of the 30S subunit body where it stabilizes the conformation of the head with respect to the body. The sequence is that of Small ribosomal subunit protein uS5 from Polaromonas naphthalenivorans (strain CJ2).